A 1029-amino-acid chain; its full sequence is 2-oxoglutarate dehydrogenase, mitochondrial (1029 aa).

Thiamine diphosphate-binding residues include Arg317, Asp415, Asn448, Ile450, and Gln676. Residues Asp415, Asn448, and Ile450 each coordinate Mg(2+).

It belongs to the alpha-ketoglutarate dehydrogenase family. Homodimer. Component of the 2-oxoglutarate dehydrogenase complex. Thiamine diphosphate is required as a cofactor. Requires Mg(2+) as cofactor.

It localises to the mitochondrion matrix. The catalysed reaction is N(6)-[(R)-lipoyl]-L-lysyl-[protein] + 2-oxoglutarate + H(+) = N(6)-[(R)-S(8)-succinyldihydrolipoyl]-L-lysyl-[protein] + CO2. Its function is as follows. The 2-oxoglutarate dehydrogenase complex catalyzes the overall conversion of 2-oxoglutarate to succinyl-CoA and CO(2). It contains multiple copies of three enzymatic components: 2-oxoglutarate dehydrogenase (E1), dihydrolipoamide succinyltransferase (E2) and lipoamide dehydrogenase (E3). The protein is 2-oxoglutarate dehydrogenase, mitochondrial (ogdh-1) of Caenorhabditis elegans.